Here is a 258-residue protein sequence, read N- to C-terminus: uncharacterized protein (258 aa).

N-linked (GlcNAc...) asparagine; by host glycans are attached at residues N60, N104, and N113. Positions 147-156 (TTRKPGQKTT) are enriched in low complexity. Residues 147–183 (TTRKPGQKTTLSRLKTTPNKHTQHKRSTRRTSPRDYN) form a disordered region. Over residues 157 to 166 (LSRLKTTPNK) the composition is skewed to polar residues. Residues 167–177 (HTQHKRSTRRT) are compositionally biased toward basic residues. N183 is a glycosylation site (N-linked (GlcNAc...) asparagine; by host). A helical membrane pass occupies residues 208-228 (AHSAWILIVIIIIIVVILFFF).

The protein belongs to the RL11 family.

The protein resides in the membrane. This is an uncharacterized protein from Human cytomegalovirus (strain AD169) (HHV-5).